The primary structure comprises 409 residues: Mitochondrial import inner membrane translocase subunit TIM50-B (409 aa).

The N-terminal 42 residues, 1-42 (MSLIAIERVLCGWPKICRKLIVTSRSLTSGLRRALVKQPRKG), are a transit peptide targeting the mitochondrion. The Mitochondrial matrix portion of the chain corresponds to 43-127 (GDVGKPGMEL…ELERAFRRMK (85 aa)). The disordered stretch occupies residues 93 to 114 (PQTSEESNDEESRERRKLEEEE). Residues 102-111 (EESRERRKLE) show a composition bias toward basic and acidic residues. The chain crosses the membrane as a helical span at residues 128–148 (LGFGLFGIGSMLFSFWAIYFY). Residues 149–409 (GRPSLDEHGN…KNWTRGFINH (261 aa)) lie on the Mitochondrial intermembrane side of the membrane. The 144-residue stretch at 205–348 (YVQPPYTLVL…FELTSFLSVL (144 aa)) folds into the FCP1 homology domain.

This sequence belongs to the TIM50 family. Component of the TIM23 complex at least composed of Tim23, Tim17 (Tim17a1, Tim17a2 or Tim17b1) and a Tim50. As to expression, exclusively expressed in the testis.

Its subcellular location is the mitochondrion inner membrane. Functionally, essential component of the TIM23 complex, a complex that mediates the translocation of transit peptide-containing proteins across the mitochondrial inner membrane. The chain is Mitochondrial import inner membrane translocase subunit TIM50-B (ttm2) from Drosophila melanogaster (Fruit fly).